Consider the following 415-residue polypeptide: 3-isopropylmalate dehydratase large subunit (415 aa).

The [4Fe-4S] cluster site is built by Cys297, Cys355, and Cys358.

The protein belongs to the aconitase/IPM isomerase family. LeuC type 2 subfamily. In terms of assembly, heterodimer of LeuC and LeuD. [4Fe-4S] cluster serves as cofactor.

It catalyses the reaction (2R,3S)-3-isopropylmalate = (2S)-2-isopropylmalate. It functions in the pathway amino-acid biosynthesis; L-leucine biosynthesis; L-leucine from 3-methyl-2-oxobutanoate: step 2/4. Functionally, catalyzes the isomerization between 2-isopropylmalate and 3-isopropylmalate, via the formation of 2-isopropylmaleate. This is 3-isopropylmalate dehydratase large subunit from Metallosphaera sedula (strain ATCC 51363 / DSM 5348 / JCM 9185 / NBRC 15509 / TH2).